Consider the following 137-residue polypeptide: Ribosome-binding factor A (137 aa).

Positions 114 to 137 (QLIDEARAEDRELRPEDDETGNNE) are disordered. Residues 117-127 (DEARAEDRELR) are compositionally biased toward basic and acidic residues. Residues 128–137 (PEDDETGNNE) are compositionally biased toward acidic residues.

The protein belongs to the RbfA family. As to quaternary structure, monomer. Binds 30S ribosomal subunits, but not 50S ribosomal subunits or 70S ribosomes.

The protein resides in the cytoplasm. Functionally, one of several proteins that assist in the late maturation steps of the functional core of the 30S ribosomal subunit. Associates with free 30S ribosomal subunits (but not with 30S subunits that are part of 70S ribosomes or polysomes). Required for efficient processing of 16S rRNA. May interact with the 5'-terminal helix region of 16S rRNA. The sequence is that of Ribosome-binding factor A from Alcanivorax borkumensis (strain ATCC 700651 / DSM 11573 / NCIMB 13689 / SK2).